The primary structure comprises 120 residues: Adenosylhomocysteinase (120 aa).

Asparagine 34 lines the NAD(+) pocket.

The protein belongs to the adenosylhomocysteinase family. NAD(+) is required as a cofactor.

Its subcellular location is the cytoplasm. The catalysed reaction is S-adenosyl-L-homocysteine + H2O = L-homocysteine + adenosine. It participates in amino-acid biosynthesis; L-homocysteine biosynthesis; L-homocysteine from S-adenosyl-L-homocysteine: step 1/1. Its function is as follows. May play a key role in the regulation of the intracellular concentration of adenosylhomocysteine. The sequence is that of Adenosylhomocysteinase (ahcY) from Streptomyces fradiae (Streptomyces roseoflavus).